Reading from the N-terminus, the 376-residue chain is Protein RecA (376 aa).

65-72 (GPESSGKT) provides a ligand contact to ATP. Positions 316 to 376 (EHDEIFTSVR…GDDLSDDDIY (61 aa)) are disordered. Positions 331 to 350 (GEKKDSDEDPGDNKKSKDSA) are enriched in basic and acidic residues. Positions 366-376 (PGDDLSDDDIY) are enriched in acidic residues.

This sequence belongs to the RecA family.

The protein localises to the cytoplasm. Can catalyze the hydrolysis of ATP in the presence of single-stranded DNA, the ATP-dependent uptake of single-stranded DNA by duplex DNA, and the ATP-dependent hybridization of homologous single-stranded DNAs. It interacts with LexA causing its activation and leading to its autocatalytic cleavage. The sequence is that of Protein RecA from Oenococcus oeni (strain ATCC BAA-331 / PSU-1).